A 305-amino-acid chain; its full sequence is tRNA pseudouridine synthase B (305 aa).

Asp-39 (nucleophile) is an active-site residue.

It belongs to the pseudouridine synthase TruB family. Type 1 subfamily.

The enzyme catalyses uridine(55) in tRNA = pseudouridine(55) in tRNA. In terms of biological role, responsible for synthesis of pseudouridine from uracil-55 in the psi GC loop of transfer RNAs. This Staphylococcus haemolyticus (strain JCSC1435) protein is tRNA pseudouridine synthase B.